Consider the following 324-residue polypeptide: MLTSEAVVAASARLGPTSGPKQEEVCQPSGAVHESIIRAPLDYLLMLPGKNVRGKMITAFNEWLQLPAEKLEVIKRIVELLHTASLLLDDIQDSSKLRRGLPVAHSIFGISQTINSANYAYFLAQQELPKLGDRRAFEIFTEELLNLHRGQGMDLYWRDSLICPTEEEYLAMVSNKTGGLFRLAIKLMQMASETDKDYVPLVNLLGNIFQVRDDYLNLQSDAYSKNKGFGEDLTEGKFSFPIIHSIRANPANIQLSSILKQRTDDNDVKEFAIRYIESTGSFEYCRQRLAELAAEARELAKDMEGTATHAQGIERILGMLGIME.

Isopentenyl diphosphate-binding residues include K50, R53, and H82. D89 and D93 together coordinate Mg(2+). Position 98 (R98) interacts with dimethylallyl diphosphate. Residue R99 coordinates isopentenyl diphosphate. K176, T177, and Q210 together coordinate dimethylallyl diphosphate. Mg(2+) is bound at residue D213. Residues N217, K227, and K237 each coordinate dimethylallyl diphosphate.

It belongs to the FPP/GGPP synthase family. Mg(2+) is required as a cofactor.

It catalyses the reaction isopentenyl diphosphate + dimethylallyl diphosphate = (2E)-geranyl diphosphate + diphosphate. It carries out the reaction isopentenyl diphosphate + (2E)-geranyl diphosphate = (2E,6E)-farnesyl diphosphate + diphosphate. The enzyme catalyses isopentenyl diphosphate + (2E,6E)-farnesyl diphosphate = (2E,6E,10E)-geranylgeranyl diphosphate + diphosphate. It functions in the pathway secondary metabolite biosynthesis; terpenoid biosynthesis. Its function is as follows. Geranylgeranyl pyrophosphate synthase; part of the gene cluster that mediates the biosynthesis of diterpenoid pyrones. The first step of the pathway is the synthesis of the alpha-pyrone moiety by the polyketide synthase dpmpA via condensation of one acetyl-CoA starter unit with 3 malonyl-CoA units and 2 methylations. The alpha-pyrone is then combined with geranylgeranyl pyrophosphate (GGPP) formed by the GGPP synthase dpmpD through the action of the prenyltransferase dpmpC to yield a linear alpha-pyrone diterpenoid. Subsequent steps in the diterpenoid pyrone biosynthetic pathway involve the decalin core formation, which is initiated by the epoxidation of the C10-C11 olefin by the FAD-dependent oxidoreductase dpmpE, and is followed by a cyclization cascade catalyzed by the terpene cyclase dpmpB. The short chain dehydrogenase/reductase dpmpG then oxidizes the 8S hydroxy group to a ketone and the short chain dehydrogenase/reductase dpmpH reduces the ketone to the 8R hydroxy group to yield higginsianin B. Higginsianin B is further methylated by the methyltransferase dpmpI to produce the intermediate named FDDP B. The cytochrome P450 monooxygenase dpmpJ then oxidizes the C-26 methyl to primary alcohol, producing the final diterpenoid pyrone with a C-26 primary alcohol on the gamma-pyrone moiety named FDDP C. The sequence is that of Geranylgeranyl pyrophosphate synthase dpmpD from Macrophomina phaseolina (strain MS6) (Charcoal rot fungus).